The following is a 160-amino-acid chain: uncharacterized protein (160 aa).

The protein localises to the plastid. This is an uncharacterized protein from Euglena longa (Euglenophycean alga).